Here is a 200-residue protein sequence, read N- to C-terminus: MIASVRGEVLEIALDHAVIESAGVGYRVNATPATLGGLQRGSEARLVTAMIVREDSMTLYGFPDSESKELFGLLQTVSGVGPRLAMATLAVLEPDALRAALAEGNVTALTRVPGIGKRGAERMVVELRDKVDAVASTSGAVPLGAGGGGSVRDQIVEALVGLGFPAKQAEQAADSVLAEAPESTTSTALRSALSLLGKTR.

A domain I region spans residues 1–63 (MIASVRGEVL…EDSMTLYGFP (63 aa)). The segment at 64–142 (DSESKELFGL…AVASTSGAVP (79 aa)) is domain II. The tract at residues 142–146 (PLGAG) is flexible linker. Positions 147–200 (GGGSVRDQIVEALVGLGFPAKQAEQAADSVLAEAPESTTSTALRSALSLLGKTR) are domain III.

It belongs to the RuvA family. As to quaternary structure, homotetramer. Forms an RuvA(8)-RuvB(12)-Holliday junction (HJ) complex. HJ DNA is sandwiched between 2 RuvA tetramers; dsDNA enters through RuvA and exits via RuvB. An RuvB hexamer assembles on each DNA strand where it exits the tetramer. Each RuvB hexamer is contacted by two RuvA subunits (via domain III) on 2 adjacent RuvB subunits; this complex drives branch migration. In the full resolvosome a probable DNA-RuvA(4)-RuvB(12)-RuvC(2) complex forms which resolves the HJ.

The protein resides in the cytoplasm. Functionally, the RuvA-RuvB-RuvC complex processes Holliday junction (HJ) DNA during genetic recombination and DNA repair, while the RuvA-RuvB complex plays an important role in the rescue of blocked DNA replication forks via replication fork reversal (RFR). RuvA specifically binds to HJ cruciform DNA, conferring on it an open structure. The RuvB hexamer acts as an ATP-dependent pump, pulling dsDNA into and through the RuvAB complex. HJ branch migration allows RuvC to scan DNA until it finds its consensus sequence, where it cleaves and resolves the cruciform DNA. This is Holliday junction branch migration complex subunit RuvA from Rhodococcus jostii (strain RHA1).